The sequence spans 642 residues: Threonine--tRNA ligase (642 aa).

Residues 1–61 (MPVITLPDGS…DTDSELSIIT (61 aa)) enclose the TGS domain. The interval 243–534 (DHRKIGKQLD…LIEEYAGKFP (292 aa)) is catalytic. Zn(2+) contacts are provided by cysteine 334, histidine 385, and histidine 511.

Belongs to the class-II aminoacyl-tRNA synthetase family. In terms of assembly, homodimer. Requires Zn(2+) as cofactor.

It localises to the cytoplasm. The enzyme catalyses tRNA(Thr) + L-threonine + ATP = L-threonyl-tRNA(Thr) + AMP + diphosphate + H(+). In terms of biological role, catalyzes the attachment of threonine to tRNA(Thr) in a two-step reaction: L-threonine is first activated by ATP to form Thr-AMP and then transferred to the acceptor end of tRNA(Thr). Also edits incorrectly charged L-seryl-tRNA(Thr). This Shewanella sediminis (strain HAW-EB3) protein is Threonine--tRNA ligase.